The sequence spans 133 residues: Small ribosomal subunit protein eS8 (133 aa).

Residues 1-22 (MGFYQGPDNRKITGGLKGKHRD) are disordered.

It belongs to the eukaryotic ribosomal protein eS8 family. In terms of assembly, part of the 30S ribosomal subunit.

This is Small ribosomal subunit protein eS8 from Saccharolobus islandicus (strain Y.N.15.51 / Yellowstone #2) (Sulfolobus islandicus).